The primary structure comprises 435 residues: uncharacterized protein (435 aa).

12 helical membrane-spanning segments follow: residues 26–46 (LLSG…VAAP), 61–81 (IVFS…GSLL), 96–116 (IWSF…LYLF), 119–139 (LIGL…ALWF), 150–170 (LFDS…AFLV), 177–197 (VAFL…WQYY), 242–262 (VWGL…LLTW), 281–301 (FTAV…GWLV), 325–345 (FGFF…IICI), 347–367 (IGLA…AELA), 385–405 (LFGG…TGSF), and 407–427 (LSFL…VFVL).

It belongs to the major facilitator superfamily. Phthalate permease family.

Its subcellular location is the cell membrane. This is an uncharacterized protein from Bacillus subtilis (strain 168).